Consider the following 336-residue polypeptide: Methionine synthase (336 aa).

4 residues coordinate Zn(2+): H210, C212, E234, and C294.

The protein belongs to the archaeal MetE family. Zn(2+) serves as cofactor.

Its pathway is amino-acid biosynthesis; L-methionine biosynthesis via de novo pathway. Catalyzes the transfer of a methyl group to L-homocysteine resulting in methionine formation. The physiological methyl donor is unknown. This is Methionine synthase from Thermococcus kodakarensis (strain ATCC BAA-918 / JCM 12380 / KOD1) (Pyrococcus kodakaraensis (strain KOD1)).